Consider the following 136-residue polypeptide: Large ribosomal subunit protein uL16 (136 aa).

The protein belongs to the universal ribosomal protein uL16 family. In terms of assembly, part of the 50S ribosomal subunit.

In terms of biological role, binds 23S rRNA and is also seen to make contacts with the A and possibly P site tRNAs. This Vibrio vulnificus (strain YJ016) protein is Large ribosomal subunit protein uL16.